The primary structure comprises 332 residues: Transaldolase (332 aa).

Lys-136 acts as the Schiff-base intermediate with substrate in catalysis.

This sequence belongs to the transaldolase family. Type 1 subfamily.

The protein localises to the cytoplasm. It catalyses the reaction D-sedoheptulose 7-phosphate + D-glyceraldehyde 3-phosphate = D-erythrose 4-phosphate + beta-D-fructose 6-phosphate. It functions in the pathway carbohydrate degradation; pentose phosphate pathway; D-glyceraldehyde 3-phosphate and beta-D-fructose 6-phosphate from D-ribose 5-phosphate and D-xylulose 5-phosphate (non-oxidative stage): step 2/3. In terms of biological role, transaldolase is important for the balance of metabolites in the pentose-phosphate pathway. The chain is Transaldolase from Nostoc sp. (strain PCC 7120 / SAG 25.82 / UTEX 2576).